The chain runs to 453 residues: Bifunctional protein GlmU (453 aa).

A pyrophosphorylase region spans residues 1–228; the sequence is MPHWAAVIMA…VHEALGINSR (228 aa). UDP-N-acetyl-alpha-D-glucosamine is bound by residues lysine 23, glutamine 73, 78–79, 100–102, glycine 139, glutamate 153, asparagine 168, and asparagine 226; these read GT and SGD. Aspartate 102 contributes to the Mg(2+) binding site. Asparagine 226 serves as a coordination point for Mg(2+). Positions 229-249 are linker; that stretch reads AQLAAAEDVARQRILSYWMEE. An N-acetyltransferase region spans residues 250–453; it reads GVTIIDPRST…IENWVRNKKK (204 aa). UDP-N-acetyl-alpha-D-glucosamine contacts are provided by arginine 331 and lysine 349. Catalysis depends on histidine 361, which acts as the Proton acceptor. Residues tyrosine 364 and asparagine 375 each coordinate UDP-N-acetyl-alpha-D-glucosamine. Acetyl-CoA contacts are provided by residues alanine 378, 384-385, serine 403, alanine 421, and arginine 438; that span reads NY.

In the N-terminal section; belongs to the N-acetylglucosamine-1-phosphate uridyltransferase family. The protein in the C-terminal section; belongs to the transferase hexapeptide repeat family. As to quaternary structure, homotrimer. It depends on Mg(2+) as a cofactor.

Its subcellular location is the cytoplasm. It carries out the reaction alpha-D-glucosamine 1-phosphate + acetyl-CoA = N-acetyl-alpha-D-glucosamine 1-phosphate + CoA + H(+). It catalyses the reaction N-acetyl-alpha-D-glucosamine 1-phosphate + UTP + H(+) = UDP-N-acetyl-alpha-D-glucosamine + diphosphate. It functions in the pathway nucleotide-sugar biosynthesis; UDP-N-acetyl-alpha-D-glucosamine biosynthesis; N-acetyl-alpha-D-glucosamine 1-phosphate from alpha-D-glucosamine 6-phosphate (route II): step 2/2. It participates in nucleotide-sugar biosynthesis; UDP-N-acetyl-alpha-D-glucosamine biosynthesis; UDP-N-acetyl-alpha-D-glucosamine from N-acetyl-alpha-D-glucosamine 1-phosphate: step 1/1. The protein operates within bacterial outer membrane biogenesis; LPS lipid A biosynthesis. Its function is as follows. Catalyzes the last two sequential reactions in the de novo biosynthetic pathway for UDP-N-acetylglucosamine (UDP-GlcNAc). The C-terminal domain catalyzes the transfer of acetyl group from acetyl coenzyme A to glucosamine-1-phosphate (GlcN-1-P) to produce N-acetylglucosamine-1-phosphate (GlcNAc-1-P), which is converted into UDP-GlcNAc by the transfer of uridine 5-monophosphate (from uridine 5-triphosphate), a reaction catalyzed by the N-terminal domain. The polypeptide is Bifunctional protein GlmU (Desulfitobacterium hafniense (strain Y51)).